A 373-amino-acid polypeptide reads, in one-letter code: Protein RETARDED ROOT GROWTH, mitochondrial (373 aa).

Residues 1–49 constitute a mitochondrion transit peptide; that stretch reads MGKWRAVAALLLRNQLLNSSKRLNLSSSPCVSKHPTIGLASRFLNFRHF. A helical membrane pass occupies residues 346 to 362; it reads EWCIIFLLAIENAIGIY.

The protein belongs to the RMD1/sif2 family. In terms of tissue distribution, predominantly expressed in the root meristem, in the primary and lateral root tips. Also present in leaves and pollen.

The protein resides in the mitochondrion membrane. It localises to the mitochondrion. In terms of biological role, required for the maintenance of mitochondrial structure. Positive regulator of cell division and endoreduplication but negative regulator of cell expansion in the postembryonic root meristem, thus leading to the promotion of root growth. The polypeptide is Protein RETARDED ROOT GROWTH, mitochondrial (Arabidopsis thaliana (Mouse-ear cress)).